The sequence spans 202 residues: Glycerol-3-phosphate acyltransferase (202 aa).

4 helical membrane passes run 11–31, 87–107, 116–136, and 158–178; these read VLIA…GLIL, PALA…WLGF, FIGV…AIWL, and LILW…LAAL.

It belongs to the PlsY family. In terms of assembly, probably interacts with PlsX.

Its subcellular location is the cell inner membrane. The enzyme catalyses an acyl phosphate + sn-glycerol 3-phosphate = a 1-acyl-sn-glycero-3-phosphate + phosphate. It functions in the pathway lipid metabolism; phospholipid metabolism. In terms of biological role, catalyzes the transfer of an acyl group from acyl-phosphate (acyl-PO(4)) to glycerol-3-phosphate (G3P) to form lysophosphatidic acid (LPA). This enzyme utilizes acyl-phosphate as fatty acyl donor, but not acyl-CoA or acyl-ACP. The protein is Glycerol-3-phosphate acyltransferase of Methylorubrum extorquens (strain PA1) (Methylobacterium extorquens).